Consider the following 336-residue polypeptide: Transmembrane protein 19 (336 aa).

6 helical membrane passes run 15 to 35 (MITN…FWII), 49 to 69 (ISPW…SNGL), 84 to 104 (VVGF…LMFF), 218 to 238 (VTVV…IAYF), 257 to 277 (IIAF…YLGA), and 313 to 333 (VNLF…WGFW).

Belongs to the TMEM19 family.

Its subcellular location is the membrane. In Homo sapiens (Human), this protein is Transmembrane protein 19 (TMEM19).